Reading from the N-terminus, the 929-residue chain is MAYRGAGGPGGGRDYDGHNMQDLNPHSQYSNVQLPPGHEQEDEAHRSLLTQGTTLYDHDRLGAHTPPVRPVSAYSLTESYAPNAPTTVPGSAVGASPSPFQNDYGVSSGYQGAMGGHADDGFPIGGGDPQQGHPYDTEDSWVQRQNPNAAPQGGGLKRYATRKVKLVQGSVLSIDYNVPSAIRNAVQPKYREQEGTNEEFIKMRYTAATCDPNDFTLKNGYDLRPRMYNRHTELLIAITYYNEDKVLLSRTLHGVMQNIRDIVNLKKSTFWNKGGPAWQKIVVCLVFDGIEKTDKNVLDVLATIGIYQDGVVKKDVHGQETVAHIFEYTTQLSVTPSQQLIRPQDDGPNTLPPVQFIFCLKAKNSKKINSHRWLFNAFGRILNPEVCILLDAGTKPSSRSLLGLWEGFYNDKDLGGACGEIHAMLGKGGRKLLNPLVAVQNFEYKISNILDKPLESAFGYVSVLPGAFSAYRFRAIMGRPLEQYFHGDHTLSKILGKKGIEGMNIFKKNMFLAEDRILCFELVAKAGQKWHLSYIKAAKGETDVPEGAAEFISQRRRWLNGSFAATLYSLMHFGRMYKSGHNIIRMFFFHVQLIYNILNVIFTWFSLASYWLTTTVIMDLVGNPQVGQNAREGWPFGNTVTPLFNAVLKYIYLAFVILQFILALGNRPKGSKYTYVTSFFVFSVIQAYILVLSGYLVVQAFQTPIGEQIKTDTAKDFMDSIFGKSGAAGVILLALIAIYGIYFIASFMYLDPWHMFHSFPYYMLLMSTYINILMVYAFNNWHDVSWGTKGSDSNEALPSANITKGEKDEVVVEEIDKPQEDIDSQFEATVRRALAPFNDEEKPEPKDLEDSYKSFRTMLVVLWLFSNCLLAVAITSDNFDALTKNQNTARTASFFQFLLFSTAFLSLIRFIGFLWFLGKTGIMCCIARR.

Residues 1-12 (MAYRGAGGPGGG) show a composition bias toward gly residues. Disordered regions lie at residues 1 to 43 (MAYR…QEDE) and 114 to 156 (MGGH…GGGL). Composition is skewed to polar residues over residues 21–33 (QDLN…SNVQ) and 140–149 (SWVQRQNPNA). A glycan (N-linked (GlcNAc...) asparagine) is linked at Asn-560. The next 5 helical transmembrane spans lie at 587-607 (FFFH…WFSL), 643-663 (LFNA…FILA), 678-698 (SFFV…YLVV), 730-750 (VILL…FMYL), and 758-778 (SFPY…VYAF). The N-linked (GlcNAc...) asparagine glycan is linked to Asn-801. A run of 2 helical transmembrane segments spans residues 857 to 877 (TMLV…ITSD) and 897 to 917 (FLLF…LWFL).

It belongs to the chitin synthase family. Class III subfamily.

Its subcellular location is the cell membrane. The enzyme catalyses [(1-&gt;4)-N-acetyl-beta-D-glucosaminyl](n) + UDP-N-acetyl-alpha-D-glucosamine = [(1-&gt;4)-N-acetyl-beta-D-glucosaminyl](n+1) + UDP + H(+). Functionally, polymerizes chitin, a structural polymer of the cell wall and septum, by transferring the sugar moiety of UDP-GlcNAc to the non-reducing end of the growing chitin polymer. CHS1 and CHS3 have compensatory functions in cell wall modifications in responses to stresses. Involved in appressoria formation and required for full virulence. The sequence is that of Chitin synthase 1 from Pyricularia oryzae (strain 70-15 / ATCC MYA-4617 / FGSC 8958) (Rice blast fungus).